The chain runs to 188 residues: Putative manganese efflux pump MntP (188 aa).

Transmembrane regions (helical) follow at residues 3 to 23 (LSAT…ASIG), 41 to 61 (LIFG…GMLA), 62 to 82 (SQFV…FLGG), 107 to 129 (LLVT…LAFL), 143 to 163 (ATFL…PLLG), and 168 to 188 (ILGG…HFAG).

It belongs to the MntP (TC 9.B.29) family.

It is found in the cell inner membrane. Its function is as follows. Probably functions as a manganese efflux pump. The protein is Putative manganese efflux pump MntP of Klebsiella pneumoniae (strain 342).